The sequence spans 257 residues: MSIIVISGCATGIGAATRKVLEAAGHQIVGIDIRDAEVIADLSTAEGRKQAIADVLAKCSKGMDGLVLCAGLGPQTKVLGNVVSVNYFGATELMDAFLPALKKGHQPAAVVISSVASAHLAFDKNPLALALEAGEEAKARAIVEHAGEQGGNLAYAGSKNALTVAVRKRAAAWGEAGVRLNTIAPGATETPLLQAGLQDPRYGESIAKFVPPMGRRAEPSEMASVIAFLMSPAASYVHGAQIVIDGGIDAVMRPTQF.

NAD(+) is bound by residues 8–13, D32, 41–42, and G71; these read GCATGI and DL. S114 provides a ligand contact to substrate. 2 residues coordinate NAD(+): Y155 and K159. The active-site Proton acceptor is the Y155.

This sequence belongs to the short-chain dehydrogenases/reductases (SDR) family. As to quaternary structure, homodimer.

It is found in the cytoplasm. The catalysed reaction is a 3alpha-hydroxysteroid + NADP(+) = a 3-oxosteroid + NADPH + H(+). It carries out the reaction a 3alpha-hydroxysteroid + NAD(+) = a 3-oxosteroid + NADH + H(+). Catalyzes the reversible interconversion of hydroxy and oxo groups at position 3 of the steroid nucleus. Along with the 3 alpha-hydroxysteroid dehydrogenase and 3-oxo-reductase activities towards a variety of cis or trans fused A/B ring steroids, it also reduces several xenobiotic carbonyl compounds, including a metyrapone-based class of insecticides, to the respective alcohol metabolites. No detectable activity on testosterone, progesterone or 3-oxo-desogestrel. This is 3-alpha-hydroxysteroid dehydrogenase/carbonyl reductase (hsdA) from Comamonas testosteroni (Pseudomonas testosteroni).